A 589-amino-acid polypeptide reads, in one-letter code: Aspartate--tRNA(Asp/Asn) ligase (589 aa).

Residue Glu175 coordinates L-aspartate. Residues 199–202 form an aspartate region; that stretch reads QQLK. Arg221 serves as a coordination point for L-aspartate. ATP is bound by residues 221–223 and Gln230; that span reads RDE. His451 lines the L-aspartate pocket. ATP is bound at residue Glu485. Residue Arg492 coordinates L-aspartate. 537–540 is an ATP binding site; it reads GIDR.

Belongs to the class-II aminoacyl-tRNA synthetase family. Type 1 subfamily. As to quaternary structure, homodimer.

Its subcellular location is the cytoplasm. It catalyses the reaction tRNA(Asx) + L-aspartate + ATP = L-aspartyl-tRNA(Asx) + AMP + diphosphate. In terms of biological role, aspartyl-tRNA synthetase with relaxed tRNA specificity since it is able to aspartylate not only its cognate tRNA(Asp) but also tRNA(Asn). Reaction proceeds in two steps: L-aspartate is first activated by ATP to form Asp-AMP and then transferred to the acceptor end of tRNA(Asp/Asn). This chain is Aspartate--tRNA(Asp/Asn) ligase, found in Roseiflexus sp. (strain RS-1).